Reading from the N-terminus, the 189-residue chain is Crossover junction endodeoxyribonuclease RuvC (189 aa).

Active-site residues include Asp-11, Glu-71, and Asp-143. Mg(2+)-binding residues include Asp-11, Glu-71, and Asp-143.

This sequence belongs to the RuvC family. Homodimer which binds Holliday junction (HJ) DNA. The HJ becomes 2-fold symmetrical on binding to RuvC with unstacked arms; it has a different conformation from HJ DNA in complex with RuvA. In the full resolvosome a probable DNA-RuvA(4)-RuvB(12)-RuvC(2) complex forms which resolves the HJ. Requires Mg(2+) as cofactor.

Its subcellular location is the cytoplasm. The enzyme catalyses Endonucleolytic cleavage at a junction such as a reciprocal single-stranded crossover between two homologous DNA duplexes (Holliday junction).. Functionally, the RuvA-RuvB-RuvC complex processes Holliday junction (HJ) DNA during genetic recombination and DNA repair. Endonuclease that resolves HJ intermediates. Cleaves cruciform DNA by making single-stranded nicks across the HJ at symmetrical positions within the homologous arms, yielding a 5'-phosphate and a 3'-hydroxyl group; requires a central core of homology in the junction. The consensus cleavage sequence is 5'-(A/T)TT(C/G)-3'. Cleavage occurs on the 3'-side of the TT dinucleotide at the point of strand exchange. HJ branch migration catalyzed by RuvA-RuvB allows RuvC to scan DNA until it finds its consensus sequence, where it cleaves and resolves the cruciform DNA. In Methylorubrum populi (strain ATCC BAA-705 / NCIMB 13946 / BJ001) (Methylobacterium populi), this protein is Crossover junction endodeoxyribonuclease RuvC.